The following is a 400-amino-acid chain: Transposase for insertion sequence element ISRM3 (400 aa).

The protein belongs to the transposase mutator family.

Required for the transposition of the insertion element. The protein is Transposase for insertion sequence element ISRM3 of Rhizobium meliloti (strain 1021) (Ensifer meliloti).